Here is a 71-residue protein sequence, read N- to C-terminus: Small ribosomal subunit protein eS17 (71 aa).

This sequence belongs to the eukaryotic ribosomal protein eS17 family.

The chain is Small ribosomal subunit protein eS17 from Pyrobaculum islandicum (strain DSM 4184 / JCM 9189 / GEO3).